The sequence spans 306 residues: Putative dihydroorotate dehydrogenase A (fumarate) (306 aa).

FMN contacts are provided by residues Ser24 and 48-49 (KS). Substrate is bound by residues Lys48, 72–76 (NAVGL), and Asn129. An FMN-binding site is contributed by Asn129. Cys132 (nucleophile) is an active-site residue. FMN is bound by residues Lys167 and Ile192. 193–194 (NS) serves as a coordination point for substrate. FMN contacts are provided by residues Gly218 and 244-245 (GG).

Belongs to the dihydroorotate dehydrogenase family. Type 1 subfamily. In terms of assembly, homodimer. Requires FMN as cofactor.

It is found in the cytoplasm. It carries out the reaction (S)-dihydroorotate + fumarate = orotate + succinate. Its pathway is pyrimidine metabolism; UMP biosynthesis via de novo pathway. Catalyzes the conversion of dihydroorotate to orotate with fumarate as the electron acceptor. In Aeropyrum pernix (strain ATCC 700893 / DSM 11879 / JCM 9820 / NBRC 100138 / K1), this protein is Putative dihydroorotate dehydrogenase A (fumarate) (pyrD).